We begin with the raw amino-acid sequence, 463 residues long: Xanthone prenyltransferase B (463 aa).

It belongs to the tryptophan dimethylallyltransferase family.

Its pathway is secondary metabolite biosynthesis. With respect to regulation, mn(2+) and Co(2+) strongly enhance prenylation activity. Functionally, dehydrogenase involved in the conversion of monodictyphenone to the prenyl xanthones such as emericellin, shamixanthone and epishamixanthone. Monodictyphenone is first converted to variecoxanthone A via a paeciloxanthone intermediate by the consecutive actions of the FAD-dependent monooxygenase mdpD and the xanthone prenyltransferase xptB. XptB catalyzes regular O-prenylation at the hydroxy group of C-7 of the xanthone ring. Variecoxanthone A is further prenylated to emericellin by xptA before being reduced to shamixanthone and epishamixanthone by the dehydrogenase xptC. In Emericella nidulans (strain FGSC A4 / ATCC 38163 / CBS 112.46 / NRRL 194 / M139) (Aspergillus nidulans), this protein is Xanthone prenyltransferase B.